We begin with the raw amino-acid sequence, 90 residues long: Protein S100-A6 (90 aa).

EF-hand domains follow at residues 12–47 and 48–83; these read LIGI…IGSK and LQDA…LAMI. Residues Thr28 and Glu33 each coordinate Ca(2+). Lys40 carries the post-translational modification N6-acetyllysine. Phosphoserine is present on Ser46. An N6-acetyllysine; alternate modification is found at Lys47. An N6-succinyllysine; alternate modification is found at Lys47. Residues Asp61, Asn63, Asp65, Glu67, and Glu72 each contribute to the Ca(2+) site.

It belongs to the S-100 family. As to quaternary structure, homodimer; head to tail assembly of 2 subunits. Interacts with CACYBP in a calcium-dependent manner. Interacts with ANXA2 and ANXA11 (via N-terminus). Interacts with SUGT1. Interacts with TP53; has higher affinity for TP53 that is phosphorylated on its N-terminal domain, and lower affinity for TP53 that is phosphorylated on its C-terminal domain. Interacts with tropomyosin. Interacts with FKBP4. Interacts with PPP5C (via TPR repeats); the interaction is calcium-dependent and modulates PPP5C activity. Interacts with TPPP; this interaction inhibits TPPP dimerization.

The protein resides in the nucleus envelope. It localises to the cytoplasm. The protein localises to the cell membrane. In terms of biological role, may function as calcium sensor and modulator, contributing to cellular calcium signaling. May function by interacting with other proteins, such as TPR-containing proteins, and indirectly play a role in many physiological processes such as the reorganization of the actin cytoskeleton and in cell motility. Binds 2 calcium ions. Calcium binding is cooperative. This Oryctolagus cuniculus (Rabbit) protein is Protein S100-A6 (S100A6).